Reading from the N-terminus, the 424-residue chain is MNKKPSKYFPSLNRTDYKNCNFLCNGFSLKPNEKKSSKNASMASKLLTTFFLIFFVLDIDLVATSMTSVSSAVEVLSDSGYLSMGLTLKLANQDLNLEDWQELTLFAPSDQSFSKFGQPSLLDMKYQLSPTRLPGETLRNLPNGAKIPTLRSNYSLTVTNSSRFGGKTSINNVVVQDSPVFDDGYVVIYGSDEFFTSPTKISDDSSSSSSIPSTTSSTGSIPIPSSATQTPPSPNIASDSTRNLPNRSKPVNRFNIFESASRLLMSRGFVIIATFLALQLEDNTSGNDTKITVFAPIDEAIPNPTTKFSDYVTIFRGHVVSQLLLWKDLQKFAKEGSILQTVLKGYEIEISLSGDILLLNGVPLIYPDLYVNDWIAVHGFNQMIVTKEKQVDVGDSITVLNNGEQEEEGVHGEYSSELGDYGLH.

Residues 46–66 (LLTTFFLIFFVLDIDLVATSM) form a helical membrane-spanning segment. The FAS1 1 domain occupies 56–194 (VLDIDLVATS…YVVIYGSDEF (139 aa)). Residues Asn153 and Asn160 are each glycosylated (N-linked (GlcNAc...) asparagine). Positions 199-226 (TKISDDSSSSSSIPSTTSSTGSIPIPSS) are enriched in low complexity. The disordered stretch occupies residues 199–246 (TKISDDSSSSSSIPSTTSSTGSIPIPSSATQTPPSPNIASDSTRNLPN). Positions 227-246 (ATQTPPSPNIASDSTRNLPN) are enriched in polar residues. Asn246, Asn283, and Asn287 each carry an N-linked (GlcNAc...) asparagine glycan. One can recognise an FAS1 2 domain in the interval 250–384 (PVNRFNIFES…IAVHGFNQMI (135 aa)). The tract at residues 405-424 (QEEEGVHGEYSSELGDYGLH) is disordered.

Belongs to the fasciclin-like AGP family.

The protein resides in the membrane. May be a cell surface adhesion protein. This Arabidopsis thaliana (Mouse-ear cress) protein is Putative fasciclin-like arabinogalactan protein 20 (FLA20).